A 197-amino-acid polypeptide reads, in one-letter code: UPF0725 protein At5g41640 (197 aa).

Belongs to the UPF0725 (EMB2204) family.

In Arabidopsis thaliana (Mouse-ear cress), this protein is UPF0725 protein At5g41640.